A 474-amino-acid polypeptide reads, in one-letter code: ATP synthase subunit beta (474 aa).

151–158 (GGAGVGKT) serves as a coordination point for ATP.

It belongs to the ATPase alpha/beta chains family. As to quaternary structure, F-type ATPases have 2 components, CF(1) - the catalytic core - and CF(0) - the membrane proton channel. CF(1) has five subunits: alpha(3), beta(3), gamma(1), delta(1), epsilon(1). CF(0) has four main subunits: a(1), b(1), b'(1) and c(9-12).

It localises to the cell inner membrane. It carries out the reaction ATP + H2O + 4 H(+)(in) = ADP + phosphate + 5 H(+)(out). Produces ATP from ADP in the presence of a proton gradient across the membrane. The catalytic sites are hosted primarily by the beta subunits. The chain is ATP synthase subunit beta from Jannaschia sp. (strain CCS1).